Here is a 351-residue protein sequence, read N- to C-terminus: Phosphate acyltransferase (351 aa).

The protein belongs to the PlsX family. Homodimer. Probably interacts with PlsY.

Its subcellular location is the cytoplasm. The enzyme catalyses a fatty acyl-[ACP] + phosphate = an acyl phosphate + holo-[ACP]. It functions in the pathway lipid metabolism; phospholipid metabolism. Catalyzes the reversible formation of acyl-phosphate (acyl-PO(4)) from acyl-[acyl-carrier-protein] (acyl-ACP). This enzyme utilizes acyl-ACP as fatty acyl donor, but not acyl-CoA. This is Phosphate acyltransferase from Neisseria meningitidis serogroup C / serotype 2a (strain ATCC 700532 / DSM 15464 / FAM18).